A 1375-amino-acid polypeptide reads, in one-letter code: Capping protein, Arp2/3 and myosin-I linker protein 3 (1375 aa).

The disordered stretch occupies residues 124-151 (IRRGNADTPEGPRDTSPNSETSTSTTHS). Low complexity predominate over residues 138–151 (TSPNSETSTSTTHS). LRR repeat units lie at residues 244-264 (SLEE…QKLA), 274-295 (VLHA…SLSQ), 303-323 (GLTK…QALG), 335-357 (SLRY…NALY), 365-386 (ALVH…GALL), 392-413 (HLTY…EAPP), 424-444 (TLSH…RALL), 455-475 (DLHL…ALQE), 482-501 (CIGS…LTLV), and 509-530 (SLKH…EEIL). Disordered stretches follow at residues 864–901 (RTLS…GTNI) and 969–1375 (KLRH…PGTD). Pro residues predominate over residues 981-997 (PRTTPPGPGRPSVPVPG). The segment covering 1007–1022 (RLDEGLEDFFSRRVMD) has biased composition (basic and acidic residues). Basic residues predominate over residues 1047–1062 (QKKRRRGLFHFRRPRS). Residues 1078-1097 (LPPPPPPPPTQESPPSPDPP) are compositionally biased toward pro residues. The segment covering 1098-1108 (SLGNNSSPCWS) has biased composition (low complexity). Over residues 1219–1229 (RRAEATWHIAE) the composition is skewed to basic and acidic residues. Over residues 1233-1244 (ANHSCQSPSPAS) the composition is skewed to polar residues. The segment covering 1272–1281 (PIGPRPPKPV) has biased composition (pro residues). Residues 1348–1360 (QSCDKLEPDRRQP) are compositionally biased toward basic and acidic residues.

Belongs to the CARMIL family.

The protein resides in the cytoplasm. The protein localises to the cell membrane. The chain is Capping protein, Arp2/3 and myosin-I linker protein 3 (Carmil3) from Mus musculus (Mouse).